The following is a 375-amino-acid chain: Chaperone protein DnaJ (375 aa).

In terms of domain architecture, J spans 5 to 70 (DYYSLLEVER…QKRAAYDRYG (66 aa)). The segment at 135 to 213 (GKTVDIEIDV…CHGEGRCEKH (79 aa)) adopts a CR-type zinc-finger fold. Residues C148, C151, C165, C168, C187, C190, C201, and C204 each contribute to the Zn(2+) site. 4 CXXCXGXG motif repeats span residues 148-155 (CDACHGSG), 165-172 (CDTCHGSG), 187-194 (CPVCQGKG), and 201-208 (CPECHGEG).

It belongs to the DnaJ family. Homodimer. Zn(2+) is required as a cofactor.

The protein resides in the cytoplasm. Participates actively in the response to hyperosmotic and heat shock by preventing the aggregation of stress-denatured proteins and by disaggregating proteins, also in an autonomous, DnaK-independent fashion. Unfolded proteins bind initially to DnaJ; upon interaction with the DnaJ-bound protein, DnaK hydrolyzes its bound ATP, resulting in the formation of a stable complex. GrpE releases ADP from DnaK; ATP binding to DnaK triggers the release of the substrate protein, thus completing the reaction cycle. Several rounds of ATP-dependent interactions between DnaJ, DnaK and GrpE are required for fully efficient folding. Also involved, together with DnaK and GrpE, in the DNA replication of plasmids through activation of initiation proteins. In Zymomonas mobilis subsp. mobilis (strain ATCC 31821 / ZM4 / CP4), this protein is Chaperone protein DnaJ.